A 466-amino-acid chain; its full sequence is Argininosuccinate lyase (466 aa).

The protein belongs to the lyase 1 family. Argininosuccinate lyase subfamily.

The protein resides in the cytoplasm. It carries out the reaction 2-(N(omega)-L-arginino)succinate = fumarate + L-arginine. Its pathway is amino-acid biosynthesis; L-arginine biosynthesis; L-arginine from L-ornithine and carbamoyl phosphate: step 3/3. In Synechococcus sp. (strain ATCC 27144 / PCC 6301 / SAUG 1402/1) (Anacystis nidulans), this protein is Argininosuccinate lyase.